A 349-amino-acid chain; its full sequence is MAKNQWRPYTNGSHAPSTPRHLLSIADLTPTEFATLVRNASSYKKTIKSDSMPERLTGALSGKTVAMMFSKRSTRTRVSTEGAVVKMGGHPMFLGKDDIQLGVNESLYDTSVVISSMVSCIVARVGPHSDIANLAKHSSVPVINALCDTFHPLQAIADFLTIHESFASQSATHGTHPSSLGLEGLKIAWVGDANNVLFDLAIAATKMGVNVAVATPRGYEIPSHIVELIQKAREGVQSPGNLTQTTVPEVAVKDADVIVTDTWISMGQETEKIKRLEAFKDFKVTSELAKRGGAKENWKFMHCLPRHPEEVSDEVFYSERSLVFPEAENRLWAAISALEAFVVNKGKIA.

Residues 73-76 (STRT), Arg124, His151, and Gln154 each bind carbamoyl phosphate. L-ornithine is bound by residues Asn195, Asp261, Ser265, and Met266. Cys303 serves as the catalytic Proton acceptor. Carbamoyl phosphate contacts are provided by residues 303–304 (CL) and Arg330.

It belongs to the aspartate/ornithine carbamoyltransferase superfamily. OTCase family. In terms of assembly, homotrimer.

The protein resides in the mitochondrion matrix. It carries out the reaction carbamoyl phosphate + L-ornithine = L-citrulline + phosphate + H(+). It functions in the pathway amino-acid biosynthesis; L-arginine biosynthesis; L-arginine from L-ornithine and carbamoyl phosphate: step 1/3. This Coccidioides immitis (strain RS) (Valley fever fungus) protein is Ornithine carbamoyltransferase, mitochondrial.